We begin with the raw amino-acid sequence, 551 residues long: Glucose-6-phosphate isomerase (551 aa).

The active-site Proton donor is the Glu-352. Residues His-383 and Lys-511 contribute to the active site.

Belongs to the GPI family.

It localises to the cytoplasm. It catalyses the reaction alpha-D-glucose 6-phosphate = beta-D-fructose 6-phosphate. Its pathway is carbohydrate biosynthesis; gluconeogenesis. It functions in the pathway carbohydrate degradation; glycolysis; D-glyceraldehyde 3-phosphate and glycerone phosphate from D-glucose: step 2/4. Functionally, catalyzes the reversible isomerization of glucose-6-phosphate to fructose-6-phosphate. The polypeptide is Glucose-6-phosphate isomerase (Chlorobium luteolum (strain DSM 273 / BCRC 81028 / 2530) (Pelodictyon luteolum)).